Reading from the N-terminus, the 996-residue chain is GPI ethanolamine phosphate transferase 1 (996 aa).

Residues 1–8 are Cytoplasmic-facing; that stretch reads MAAFPRFR. A helical membrane pass occupies residues 9–29; sequence FLAIAVIFHFAYIFSIFDIYF. At 30 to 463 the chain is on the lumenal side; the sequence is VSPIETGMRL…LQTYDWLFLR (434 aa). Asn-47, Asn-147, and Asn-210 each carry an N-linked (GlcNAc...) asparagine glycan. Residues 464-484 traverse the membrane as a helical segment; the sequence is ALITIGYLGWIAYALTTVVDL. Residues 485–495 lie on the Cytoplasmic side of the membrane; the sequence is HVLHGRVRPSR. The helical transmembrane segment at 496-516 threads the bilayer; sequence TLGGGLFFTSVLVALYASLVI. The Lumenal segment spans residues 517 to 518; it reads SK. The helical transmembrane segment at 519–539 threads the bilayer; the sequence is SPLTYYVYAFFPVFFWEEVYA. Topologically, residues 540 to 560 are cytoplasmic; it reads HRESLAAGRKELLGHINSGGS. The chain crosses the membrane as a helical span at residues 561–581; sequence VASFVLNSALYVGVIESLALG. Over 582–586 the chain is Lumenal; it reads YIHRE. The helical transmembrane segment at 587-607 threads the bilayer; sequence ILSVLFVLGSFWPFTHGLSFL. Residues 608–612 are Cytoplasmic-facing; sequence KKHGA. Residues 613 to 633 traverse the membrane as a helical segment; that stretch reads LSATWFLACIAMSTFTLLPAM. Topologically, residues 634-637 are lumenal; that stretch reads KAEN. The chain crosses the membrane as a helical span at residues 638–658; sequence VNLITIGGVLMVVIGLLYLIF. Topologically, residues 659 to 681 are cytoplasmic; sequence EDFVLADFSWNAKPTSRNHLSRS. A helical transmembrane segment spans residues 682 to 702; sequence LVGIQVGLTVLSIIITRSSAL. The Lumenal portion of the chain corresponds to 703–715; sequence SLQAKQGLPRGNQ. Residues 716–734 traverse the membrane as a helical segment; sequence IMGWVTLVASLLMPLAYRL. The Cytoplasmic portion of the chain corresponds to 735–754; sequence RPNNHYMHRILVIFLTCAPT. A helical transmembrane segment spans residues 755–775; the sequence is FVILTISYEGLFYLVFSALLV. Topologically, residues 776-822 are lumenal; that stretch reads SWVRLEHAVQKFTSSKAPQTAATKKPTTTTESHLPAPFRPLTLHDAR. Residues 823-843 form a helical membrane-spanning segment; that stretch reads VALFFFILLQSAFFSTGNVAS. Topologically, residues 844–865 are cytoplasmic; the sequence is VSSFSLDSVYRLIPIFDPFSQG. A helical membrane pass occupies residues 866–886; that stretch reads AMLILKLMIPFALISANLGIL. Residues 887–895 lie on the Lumenal side of the membrane; the sequence is NKRLGVAPS. Residues 896–916 form a helical membrane-spanning segment; it reads ALFMVVMGISDILTLYFFWVV. The Cytoplasmic segment spans residues 917–932; the sequence is KDEGSWLEIGSTISHF. A helical transmembrane segment spans residues 933-953; sequence VIASLLCVFVSALEPVSAAFI. At 954–996 the chain is on the lumenal side; sequence AGVEVGEESELKEEGKVAEKVVEKVNEAVEGLVSGGDGGGDES.

The protein belongs to the PIGG/PIGN/PIGO family. PIGN subfamily.

Its subcellular location is the endoplasmic reticulum membrane. Its pathway is glycolipid biosynthesis; glycosylphosphatidylinositol-anchor biosynthesis. Ethanolamine phosphate transferase involved in glycosylphosphatidylinositol-anchor biosynthesis. Transfers ethanolamine phosphate to the first alpha-1,4-linked mannose of the glycosylphosphatidylinositol precursor of GPI-anchor. This chain is GPI ethanolamine phosphate transferase 1 (mcd-4), found in Neurospora crassa (strain ATCC 24698 / 74-OR23-1A / CBS 708.71 / DSM 1257 / FGSC 987).